The sequence spans 130 residues: Small ribosomal subunit protein uS9 (130 aa).

The protein belongs to the universal ribosomal protein uS9 family.

This chain is Small ribosomal subunit protein uS9, found in Lawsonia intracellularis (strain PHE/MN1-00).